Here is a 460-residue protein sequence, read N- to C-terminus: Bifunctional protein GlmU (460 aa).

Residues 1 to 229 form a pyrophosphorylase region; that stretch reads MKNYAIILAA…FDESLGVNDR (229 aa). UDP-N-acetyl-alpha-D-glucosamine contacts are provided by residues 8–11, K22, Q72, and 77–78; these read LAAG and GT. D102 is a Mg(2+) binding site. 4 residues coordinate UDP-N-acetyl-alpha-D-glucosamine: G139, E154, N169, and N227. N227 contributes to the Mg(2+) binding site. The linker stretch occupies residues 230 to 250; that stretch reads LALAQAEVIMQERINKQHMLN. Positions 251 to 460 are N-acetyltransferase; it reads GVTLQNPAAT…RLPHHPDQPQ (210 aa). R332 and K350 together coordinate UDP-N-acetyl-alpha-D-glucosamine. The active-site Proton acceptor is the H362. UDP-N-acetyl-alpha-D-glucosamine contacts are provided by Y365 and N376. Residues A379, 385-386, S404, A422, and R439 contribute to the acetyl-CoA site; that span reads NY.

This sequence in the N-terminal section; belongs to the N-acetylglucosamine-1-phosphate uridyltransferase family. In the C-terminal section; belongs to the transferase hexapeptide repeat family. Homotrimer. Mg(2+) serves as cofactor.

Its subcellular location is the cytoplasm. It carries out the reaction alpha-D-glucosamine 1-phosphate + acetyl-CoA = N-acetyl-alpha-D-glucosamine 1-phosphate + CoA + H(+). It catalyses the reaction N-acetyl-alpha-D-glucosamine 1-phosphate + UTP + H(+) = UDP-N-acetyl-alpha-D-glucosamine + diphosphate. The protein operates within nucleotide-sugar biosynthesis; UDP-N-acetyl-alpha-D-glucosamine biosynthesis; N-acetyl-alpha-D-glucosamine 1-phosphate from alpha-D-glucosamine 6-phosphate (route II): step 2/2. It functions in the pathway nucleotide-sugar biosynthesis; UDP-N-acetyl-alpha-D-glucosamine biosynthesis; UDP-N-acetyl-alpha-D-glucosamine from N-acetyl-alpha-D-glucosamine 1-phosphate: step 1/1. It participates in bacterial outer membrane biogenesis; LPS lipid A biosynthesis. In terms of biological role, catalyzes the last two sequential reactions in the de novo biosynthetic pathway for UDP-N-acetylglucosamine (UDP-GlcNAc). The C-terminal domain catalyzes the transfer of acetyl group from acetyl coenzyme A to glucosamine-1-phosphate (GlcN-1-P) to produce N-acetylglucosamine-1-phosphate (GlcNAc-1-P), which is converted into UDP-GlcNAc by the transfer of uridine 5-monophosphate (from uridine 5-triphosphate), a reaction catalyzed by the N-terminal domain. This is Bifunctional protein GlmU from Streptococcus equi subsp. zooepidemicus (strain ATCC 35246 / C74-63).